The chain runs to 318 residues: Mitochondrial thiamine pyrophosphate carrier (318 aa).

Solcar repeat units lie at residues 13–106 (ISNV…LTEL), 116–202 (RDFS…LKRA), and 214–309 (NGNF…FCNF). The helical transmembrane segment at 19–39 (AVAGSVSGLVTRVLISPLDVI) threads the bilayer. Phosphoserine is present on Ser51. Helical transmembrane passes span 87–107 (LLSIGYGAVQFLSFEALTELV), 122–142 (FLCGGLSACVATLAVHPVDVL), 173–193 (VFYKGLNPTLIAIFPYAGFQF), and 220–240 (LLCGSGAGVISKTLTYPLDLF). The Substrate recognition motif lies at 241-246 (KKRLQV). Residues 293–313 (ALSTGLVFFWYELFCNFFHHM) traverse the membrane as a helical segment.

The protein belongs to the mitochondrial carrier (TC 2.A.29) family.

It localises to the mitochondrion membrane. The catalysed reaction is thiamine phosphate(out) + thiamine diphosphate(in) = thiamine phosphate(in) + thiamine diphosphate(out). Functionally, mitochondrial transporter mediating uptake of thiamine diphosphate into mitochondria. It is not clear if the antiporter activity is affected by the membrane potential or by the proton electrochemical gradient. This chain is Mitochondrial thiamine pyrophosphate carrier (SLC25A19), found in Bos taurus (Bovine).